The primary structure comprises 349 residues: Isopentenyl-diphosphate delta-isomerase (349 aa).

Substrate is bound at residue 6-7; sequence RK. Residues 62–64, Ser93, and Asn122 contribute to the FMN site; that span reads AMT. Gln152 is a substrate binding site. Glu153 provides a ligand contact to Mg(2+). FMN-binding positions include Lys184, Thr214, 258-259, and 280-281; these read GG and AG.

The protein belongs to the IPP isomerase type 2 family. Homooctamer. Dimer of tetramers. Requires FMN as cofactor. The cofactor is NADPH. It depends on Mg(2+) as a cofactor.

The protein localises to the cytoplasm. The catalysed reaction is isopentenyl diphosphate = dimethylallyl diphosphate. Its function is as follows. Involved in the biosynthesis of isoprenoids. Catalyzes the 1,3-allylic rearrangement of the homoallylic substrate isopentenyl (IPP) to its allylic isomer, dimethylallyl diphosphate (DMAPP). The sequence is that of Isopentenyl-diphosphate delta-isomerase from Bacillus cereus (strain 03BB102).